Consider the following 742-residue polypeptide: 5-methyltetrahydropteroyltriglutamate--homocysteine methyltransferase (742 aa).

Residues 18-21 (REWK) and Lys112 each bind 5-methyltetrahydropteroyltri-L-glutamate. L-homocysteine-binding positions include 420 to 422 (IGS) and Glu473. L-methionine is bound by residues 420 to 422 (IGS) and Glu473. Trp550 is a 5-methyltetrahydropteroyltri-L-glutamate binding site. Asp588 is an L-homocysteine binding site. Asp588 lines the L-methionine pocket. A 5-methyltetrahydropteroyltri-L-glutamate-binding site is contributed by Glu594. Zn(2+)-binding residues include His630, Cys632, and Glu654. Catalysis depends on His683, which acts as the Proton donor. Residue Cys715 participates in Zn(2+) binding.

Belongs to the vitamin-B12 independent methionine synthase family. Requires Zn(2+) as cofactor.

The enzyme catalyses 5-methyltetrahydropteroyltri-L-glutamate + L-homocysteine = tetrahydropteroyltri-L-glutamate + L-methionine. It participates in amino-acid biosynthesis; L-methionine biosynthesis via de novo pathway; L-methionine from L-homocysteine (MetE route): step 1/1. Its function is as follows. Catalyzes the transfer of a methyl group from 5-methyltetrahydrofolate to homocysteine resulting in methionine formation. The chain is 5-methyltetrahydropteroyltriglutamate--homocysteine methyltransferase from Staphylococcus aureus (strain USA300).